A 370-amino-acid polypeptide reads, in one-letter code: Aminomethyltransferase (370 aa).

This sequence belongs to the GcvT family. As to quaternary structure, the glycine cleavage system is composed of four proteins: P, T, L and H.

It catalyses the reaction N(6)-[(R)-S(8)-aminomethyldihydrolipoyl]-L-lysyl-[protein] + (6S)-5,6,7,8-tetrahydrofolate = N(6)-[(R)-dihydrolipoyl]-L-lysyl-[protein] + (6R)-5,10-methylene-5,6,7,8-tetrahydrofolate + NH4(+). The glycine cleavage system catalyzes the degradation of glycine. In Prochlorococcus marinus (strain MIT 9301), this protein is Aminomethyltransferase.